A 284-amino-acid polypeptide reads, in one-letter code: Succinate dehydrogenase [ubiquinone] iron-sulfur subunit, mitochondrial (284 aa).

Residues 1–26 (MAAVVFSLRRSGPVFRLPGVLQVCRG) constitute a mitochondrion transit peptide. The 94-residue stretch at 44–137 (KKFAIYRWDP…VSKIYPLPHM (94 aa)) folds into the 2Fe-2S ferredoxin-type domain. [2Fe-2S] cluster contacts are provided by C97, C102, C105, and C117. The 4Fe-4S ferredoxin-type domain maps to 180-210 (DRDKLDGLYECILCACCSTSCPSYWWNADKY). Residues C190, C193, and C196 each contribute to the [4Fe-4S] cluster site. C200 contributes to the [3Fe-4S] cluster binding site. An a ubiquinone-binding site is contributed by W205. The [3Fe-4S] cluster site is built by C247 and C253. C257 provides a ligand contact to [4Fe-4S] cluster.

Belongs to the succinate dehydrogenase/fumarate reductase iron-sulfur protein family. Component of complex II composed of four subunits: the flavoprotein (FP) sdha, iron-sulfur protein (IP) sdhb, and a cytochrome b composed of sdhc and sdhd. [2Fe-2S] cluster serves as cofactor. [3Fe-4S] cluster is required as a cofactor. It depends on [4Fe-4S] cluster as a cofactor.

It localises to the mitochondrion inner membrane. It catalyses the reaction a quinone + succinate = fumarate + a quinol. It carries out the reaction (R)-malate + a quinone = enol-oxaloacetate + a quinol. The enzyme catalyses (S)-malate + a quinone = enol-oxaloacetate + a quinol. It participates in carbohydrate metabolism; tricarboxylic acid cycle; fumarate from succinate (eukaryal route): step 1/1. With respect to regulation, enol-oxaloacetate inhibits the succinate dehydrogenase activity. Functionally, iron-sulfur protein (IP) subunit of the succinate dehydrogenase complex (mitochondrial respiratory chain complex II), responsible for transferring electrons from succinate to ubiquinone (coenzyme Q). SDH also oxidizes malate to the non-canonical enol form of oxaloacetate, enol-oxaloacetate. Enol-oxaloacetate, which is a potent inhibitor of the succinate dehydrogenase activity, is further isomerized into keto-oxaloacetate. The protein is Succinate dehydrogenase [ubiquinone] iron-sulfur subunit, mitochondrial (sdhb) of Xenopus tropicalis (Western clawed frog).